A 397-amino-acid polypeptide reads, in one-letter code: Argininosuccinate synthase (397 aa).

ATP contacts are provided by residues 9–17 (AFSGGLDTS) and A35. The L-citrulline site is built by Y88 and S93. Residue G117 participates in ATP binding. L-aspartate-binding residues include T119, N123, and D124. Residue N123 coordinates L-citrulline. Residue R127 coordinates L-citrulline.

It belongs to the argininosuccinate synthase family. Type 1 subfamily. Homotetramer.

It localises to the cytoplasm. The enzyme catalyses L-citrulline + L-aspartate + ATP = 2-(N(omega)-L-arginino)succinate + AMP + diphosphate + H(+). The protein operates within amino-acid biosynthesis; L-arginine biosynthesis; L-arginine from L-ornithine and carbamoyl phosphate: step 2/3. The polypeptide is Argininosuccinate synthase (Xanthomonas campestris pv. campestris (strain ATCC 33913 / DSM 3586 / NCPPB 528 / LMG 568 / P 25)).